Here is a 469-residue protein sequence, read N- to C-terminus: Glutamine synthetase (469 aa).

Residues 13 to 97 enclose the GS beta-grasp domain; that stretch reads NEVKFVDLRF…IRCDILEPAT (85 aa). A GS catalytic domain is found at 105-469; sequence PRSIAKRAEE…PLEFELYYSV (365 aa). Mg(2+) is bound by residues E130 and E132. E208 is a binding site for ATP. Mg(2+) contacts are provided by E213 and E221. Residues 265–266 and G266 contribute to the L-glutamate site; that span reads NG. H270 contributes to the Mg(2+) binding site. ATP contacts are provided by residues 272–274 and S274; that span reads HQS. L-glutamate is bound by residues R322, E328, and R340. 3 residues coordinate ATP: R340, R345, and K353. E358 is a binding site for Mg(2+). R360 lines the L-glutamate pocket. Y398 carries the O-AMP-tyrosine modification.

Belongs to the glutamine synthetase family. As to quaternary structure, oligomer of 12 subunits arranged in the form of two hexameric ring. Mg(2+) serves as cofactor.

It localises to the cytoplasm. It carries out the reaction L-glutamate + NH4(+) + ATP = L-glutamine + ADP + phosphate + H(+). With respect to regulation, the activity of this enzyme could be controlled by adenylation under conditions of abundant glutamine. In terms of biological role, catalyzes the ATP-dependent biosynthesis of glutamine from glutamate and ammonia. This is Glutamine synthetase (glnAv) from Vibrio cholerae serotype O1 (strain ATCC 39315 / El Tor Inaba N16961).